A 121-amino-acid polypeptide reads, in one-letter code: uncharacterized protein (121 aa).

This is an uncharacterized protein from Streptococcus pyogenes serotype M6 (strain ATCC BAA-946 / MGAS10394).